Consider the following 229-residue polypeptide: MLYAFKLGRKLRGEEPLYPEKGGKGGSSSSGAKEAARATQYAADLQNQQFNRVMEQLAPYAAAGLPALQQIQQLSTLEGQNSALNQYYNSDQYKQLADQARYQSLNAAEATGGLGSTATSNQIASIAPTLGQNWLSGQMQNYGNLLNVGQSAAAGQASAGQNYANNAGNLAQQMAAIRSQGSGQSTLGSAISGGTSGALAGAGLAGMLGASTPWGAGIGAGIGLLGSLF.

Residues 14 to 36 form a disordered region; that stretch reads EEPLYPEKGGKGGSSSSGAKEAA.

It belongs to the podoviruses gp7 family.

Component of the phage injection machinery. Required for injection of the phage DNA into the host. The protein is DNA transfer protein gp7 (7) of Salmonella typhimurium (Bacteriophage ST64T).